Reading from the N-terminus, the 767-residue chain is MTISPPERGSTAKTQVEKVDNPATFELFGKPGHFDRALAKGPKTTTWVWNLHANAHDFDSHTSDLEEVSRKIFSAHFGHLAVIFIWLSGAFFHGARFSNFSGWLADPTHVKPSAQVVWPVFGQEILNGDMGAGFQGIQITSGLFHVWRAWGITNETQLMSLAIGALVMAGLMLNAGVFHYHKAAPKLEWFQNVESMLNHHLAGLLGLGSLSWTGHLLHVSLPTTKLMDAIDAGQPLVLNGKTIASVADIPLPHEFFNQDLLAQLYPGFGAGIGAFFSGNWAAYSDFLTFKGGLNPVTGSMWMSDIAHHHLAIAVLFIVAGHMYRTNWGIGHSIKEILEGQKGDPLLFPATKGHDGLFEFMTTSWHAQLAVNLAMLGSLSIIVAQHMYAMPPYAYMSIDYPTQIGLFTHHMWIGGFLIVGAAAHAAIAMIRDYDPAKHVDNVLDRVLKARDALISHLNWVCIWLGFHSFGLYIHNDTMRALGRPQDMFSDSAIQLKPVFAQWIQGLHAAAAGSTAPNALAGVSEVFNGSVVAVGGKVAAAPIPLGTADFMVHHIHAFTIHVTVLILLKGVLYARNSRLIPDKANLGFRFPCDGPGRGGTCQVSAWDHVFLGLFWMYNSLSIVIFHFSWKMQSDVWGTVNADGSVQHITNGNFANSAITINGWLRDFLWAQAAQVINSYGSNTSAYGLMFLGAHFVWAFSLMFLFSGRGYWQELIESIVWAHNKLKVAPAIQPRALSITQGRAVGVAHYLLGGIATTWAFFHAHILVVG.

The next 8 helical transmembrane spans lie at 72–95 (IFSAHFGHLAVIFIWLSGAFFHGA), 158–181 (LMSLAIGALVMAGLMLNAGVFHYH), 197–221 (LNHHLAGLLGLGSLSWTGHLLHVSL), 305–323 (IAHHHLAIAVLFIVAGHMY), 364–387 (WHAQLAVNLAMLGSLSIIVAQHMY), 403–429 (IGLFTHHMWIGGFLIVGAAAHAAIAMI), 451–473 (ALISHLNWVCIWLGFHSFGLYIH), and 548–566 (FMVHHIHAFTIHVTVLILL). The [4Fe-4S] cluster site is built by Cys-590 and Cys-599. 2 helical membrane passes run 606–627 (HVFLGLFWMYNSLSIVIFHFSW) and 681–703 (TSAYGLMFLGAHFVWAFSLMFLF). His-692 provides a ligand contact to chlorophyll a'. Met-700 and Tyr-708 together coordinate chlorophyll a. Trp-709 is a binding site for phylloquinone. A helical membrane pass occupies residues 741 to 761 (AVGVAHYLLGGIATTWAFFHA).

This sequence belongs to the PsaA/PsaB family. As to quaternary structure, the PsaA/B heterodimer binds the P700 chlorophyll special pair and subsequent electron acceptors. PSI consists of a core antenna complex that captures photons, and an electron transfer chain that converts photonic excitation into a charge separation. The cyanobacterial PSI reaction center is composed of one copy each of PsaA,B,C,D,E,F,I,J,K,L,M and X, and forms trimeric complexes. PSI electron transfer chain: 5 chlorophyll a, 1 chlorophyll a', 2 phylloquinones and 3 4Fe-4S clusters. PSI core antenna: 90 chlorophyll a, 22 carotenoids, 3 phospholipids and 1 galactolipid. P700 is a chlorophyll a/chlorophyll a' dimer, A0 is one or more chlorophyll a, A1 is one or both phylloquinones and FX is a shared 4Fe-4S iron-sulfur center. is required as a cofactor.

The protein localises to the cellular thylakoid membrane. It carries out the reaction reduced [plastocyanin] + hnu + oxidized [2Fe-2S]-[ferredoxin] = oxidized [plastocyanin] + reduced [2Fe-2S]-[ferredoxin]. Functionally, psaA and PsaB bind P700, the primary electron donor of photosystem I (PSI), as well as the electron acceptors A0, A1 and FX. PSI is a plastocyanin/cytochrome c6-ferredoxin oxidoreductase, converting photonic excitation into a charge separation, which transfers an electron from the donor P700 chlorophyll pair to the spectroscopically characterized acceptors A0, A1, FX, FA and FB in turn. Oxidized P700 is reduced on the lumenal side of the thylakoid membrane by plastocyanin or cytochrome c6. This is Photosystem I P700 chlorophyll a apoprotein A1 from Synechococcus sp. (strain WH7803).